The following is a 114-amino-acid chain: C-X-C motif chemokine 6 (114 aa).

The first 37 residues, 1–37, serve as a signal peptide directing secretion; sequence MSLPSSRAARVPGPSGSLCALLALLLLLTPPGPLASA. 2 disulfide bridges follow: cysteine 49/cysteine 75 and cysteine 51/cysteine 91.

The protein belongs to the intercrine alpha (chemokine CxC) family.

It localises to the secreted. Functionally, chemotactic for neutrophil granulocytes. Signals through binding and activation of its receptors (CXCR1 and CXCR2). In addition to its chemotactic and angiogenic properties, it has strong antibacterial activity against Gram-positive and Gram-negative bacteria (90-fold-higher when compared to CXCL5 and CXCL7). The polypeptide is C-X-C motif chemokine 6 (CXCL6) (Homo sapiens (Human)).